The following is a 40-amino-acid chain: Alpha-conotoxin-like Qc1.1c (40 aa).

The propeptide occupies 1–19; that stretch reads SDGRNTAANDKASNLMALR. Intrachain disulfides connect Cys-22–Cys-28 and Cys-23–Cys-36. Residues 24–26 are lacks the Ser-Xaa-Pro motif that is crucial for potent interaction with nAChR; that stretch reads PNP.

Belongs to the conotoxin A superfamily. In terms of tissue distribution, expressed by the venom duct.

The protein localises to the secreted. Functionally, alpha-conotoxins act on postsynaptic membranes, they bind to the nicotinic acetylcholine receptors (nAChR) and thus inhibit them. Has possibly a distinct nAChR binding mode from other alpha-conotoxins, due to a different three residue motif (lacks the Ser-Xaa-Pro motif). The polypeptide is Alpha-conotoxin-like Qc1.1c (Conus quercinus (Oak cone)).